The primary structure comprises 673 residues: DNA ligase (673 aa).

NAD(+) is bound by residues 35–39, 84–85, and E115; these read DAEYD and SL. K117 functions as the N6-AMP-lysine intermediate in the catalytic mechanism. Residues R138, E175, K292, and K316 each contribute to the NAD(+) site. Zn(2+) contacts are provided by C410, C413, C428, and C434. In terms of domain architecture, BRCT spans 592–673; that stretch reads PRKLPLQGLV…FLDLLERGRP (82 aa).

Belongs to the NAD-dependent DNA ligase family. LigA subfamily. The cofactor is Mg(2+). It depends on Mn(2+) as a cofactor.

It carries out the reaction NAD(+) + (deoxyribonucleotide)n-3'-hydroxyl + 5'-phospho-(deoxyribonucleotide)m = (deoxyribonucleotide)n+m + AMP + beta-nicotinamide D-nucleotide.. In terms of biological role, DNA ligase that catalyzes the formation of phosphodiester linkages between 5'-phosphoryl and 3'-hydroxyl groups in double-stranded DNA using NAD as a coenzyme and as the energy source for the reaction. It is essential for DNA replication and repair of damaged DNA. This Methylococcus capsulatus (strain ATCC 33009 / NCIMB 11132 / Bath) protein is DNA ligase.